We begin with the raw amino-acid sequence, 904 residues long: E3 SUMO-protein ligase SIZ1 (904 aa).

Over residues 1–13 (MINLEDYWEDETP) the composition is skewed to acidic residues. The disordered stretch occupies residues 1-21 (MINLEDYWEDETPGPDREPTN). In terms of domain architecture, SAP spans 34 to 68 (MELLKVSELKDICRSVSFPVSGRKAVLQDLIRNFL). The segment at 122-170 (MEGPPTVQQQSPSVIRQSPTQRRKTSTTSSTSRAPPPTNPDASSSSSSF) is disordered. Polar residues predominate over residues 127-136 (TVQQQSPSVI). Phosphoserine is present on serine 132. The span at 137–154 (RQSPTQRRKTSTTSSTSR) shows a compositional bias: low complexity. The PINIT domain occupies 162–314 (DASSSSSSFA…KLFGYIVEMI (153 aa)). The segment at 344 to 431 (EDEEMGLTTT…LQNCQKNVEQ (88 aa)) adopts an SP-RING-type zinc-finger fold. Cysteine 377, histidine 379, cysteine 400, and cysteine 403 together coordinate Zn(2+). Disordered stretches follow at residues 443–584 (ILED…DDDR), 596–616 (STNT…TLDP), and 672–733 (SPDV…ISDS). Acidic residues predominate over residues 444 to 454 (LEDDDDSDSDS). Residues 501 to 511 (NNHDDSNRHSN) show a composition bias toward basic and acidic residues. The segment covering 512-553 (DNNNNSIKNNDSHNKNNNNNNNNNNNNNDNNNSIENNDSNSN) has biased composition (low complexity). Composition is skewed to polar residues over residues 561-574 (RSNT…KNLM), 596-611 (STNT…SAPS), and 672-683 (SPDVSVSSPTPR). Positions 684 to 699 (NTASNASSSALSTPPL) are enriched in low complexity. Residues 721–733 (INSNSYTASISDS) show a composition bias toward polar residues. Serine 794 carries the phosphoserine modification. The segment at 794 to 904 (SLPTTEAITR…QDYGKKYNSG (111 aa)) is required for localization at the bud neck. The span at 877 to 894 (RQLSNTSSTSPIMGTWKT) shows a compositional bias: polar residues. The disordered stretch occupies residues 877–904 (RQLSNTSSTSPIMGTWKTQDYGKKYNSG).

The protein belongs to the PIAS family. As to quaternary structure, interacts with UBC9 and CDC3. Post-translationally, phosphorylated in early M-phase. In terms of processing, autosumoylated upon ethanol stress.

The protein localises to the cytoplasm. It is found in the nucleus. The protein resides in the bud neck. It participates in protein modification; protein sumoylation. In terms of biological role, acts as an E3 ligase mediating SUMO/Smt3 attachment to septins and PCNA. May be involved in chromosome maintenance. The chain is E3 SUMO-protein ligase SIZ1 (SIZ1) from Saccharomyces cerevisiae (strain ATCC 204508 / S288c) (Baker's yeast).